Reading from the N-terminus, the 899-residue chain is Origin recognition complex subunit 5 (899 aa).

3 disordered regions span residues 27–47 (FSSP…NDDT), 100–166 (DRIN…EYKD), and 194–238 (KNLE…DGNL). The span at 105-160 (SEEETNINDDNNDDNNGDYDDDNNSDDDDDNDDNNNNDDNNNDDDEDVDDFEDIKE) shows a compositional bias: acidic residues. The segment covering 207-218 (SSDNSMTSSSEE) has biased composition (low complexity). Positions 227-237 (ESDKESDKDGN) are enriched in basic and acidic residues. 303-310 (GLPGMGKT) is a binding site for ATP. The interval 409–469 (KRTTENIRSP…NNNSNNVRFN (61 aa)) is disordered. Over residues 455–469 (KNNFNNNNSNNVRFN) the composition is skewed to low complexity.

Belongs to the ORC5 family. As to quaternary structure, component of the origin recognition complex (ORC). Interacts with PCNA1; the interaction occurs during the trophozoite stage but not at the late schizont stage.

It localises to the nucleus. The catalysed reaction is ATP + H2O = ADP + phosphate + H(+). Functionally, component of the origin recognition complex (ORC) that binds origins of replication. The protein is Origin recognition complex subunit 5 of Plasmodium falciparum (isolate 3D7).